An 86-amino-acid chain; its full sequence is Small ribosomal subunit protein uS17 (86 aa).

It belongs to the universal ribosomal protein uS17 family. In terms of assembly, part of the 30S ribosomal subunit.

Functionally, one of the primary rRNA binding proteins, it binds specifically to the 5'-end of 16S ribosomal RNA. This Rhizorhabdus wittichii (strain DSM 6014 / CCUG 31198 / JCM 15750 / NBRC 105917 / EY 4224 / RW1) (Sphingomonas wittichii) protein is Small ribosomal subunit protein uS17.